Here is a 183-residue protein sequence, read N- to C-terminus: Probable chorismate pyruvate-lyase 2 (183 aa).

Substrate contacts are provided by R76, L114, and E166.

Belongs to the UbiC family.

The protein localises to the cytoplasm. The catalysed reaction is chorismate = 4-hydroxybenzoate + pyruvate. Its pathway is cofactor biosynthesis; ubiquinone biosynthesis. In terms of biological role, removes the pyruvyl group from chorismate, with concomitant aromatization of the ring, to provide 4-hydroxybenzoate (4HB) for the ubiquinone pathway. This Pseudomonas fluorescens (strain Pf0-1) protein is Probable chorismate pyruvate-lyase 2.